An 875-amino-acid polypeptide reads, in one-letter code: SPbeta prophage-derived uncharacterized protein YomG (875 aa).

Residues 351 to 381 (AKKAEISRINSQITNISQEIEKLKDRLSMDK) are a coiled coil. Residues 537–648 (PVANPTILNN…SIDSSGRILS (112 aa)) form the Fibronectin type-III domain.

The protein is SPbeta prophage-derived uncharacterized protein YomG (yomG) of Bacillus subtilis (strain 168).